An 82-amino-acid polypeptide reads, in one-letter code: Translational regulator CsrA (82 aa).

It belongs to the CsrA/RsmA family. In terms of assembly, homodimer; the beta-strands of each monomer intercalate to form a hydrophobic core, while the alpha-helices form wings that extend away from the core.

It is found in the cytoplasm. Its function is as follows. A translational regulator that binds mRNA to regulate translation initiation and/or mRNA stability. Usually binds in the 5'-UTR at or near the Shine-Dalgarno sequence preventing ribosome-binding, thus repressing translation. Its main target seems to be the major flagellin gene, while its function is anatagonized by FliW. In Geobacillus sp. (strain WCH70), this protein is Translational regulator CsrA.